Consider the following 526-residue polypeptide: MSVEVEYLQHEDYLYRTSKLKEIRDLGINPYPYQYTDCLEVQEIRNQFVDNELGDSEAAFRKETPKVRFAGRLVLFRSMGKNAFGQILDNDAKIQVMFNRDFSAVAGLAADAGISPIKFIEKKLDLGDILGLEGYLFFTHSGELTVLVETVTLLCKSLISLPDKHAGLADKEIRYRKRWADLISSEDVRKTFLTRSRILKLIREYMDQQSFLEVETPILQTVYGGAEATPFVTTLQALHAEMFLRISLEIALKKLLVGGMSRVYEIGKVFRNEGIDRTHNPEFTMIEAYAAYWDYNDVMKCVENLVEYIVRALNNGETQVQYSHLKSGPQVVDFKAPWIRMTMKESISVYGGVDVDLHADHELRKILETQTSLPEKTYVHASRGELIALLFDELVCDKLIAPHHITDHPLETTPLCKTLRSGDETLVERFESFCLGKELCNAYSELNDPLQQRKLLEEQMRKKALNPDSEYHPIDEEFLEALCQGMPPAGGFGIGIDRLVMMLTDAASIRDVLFFPVMRRIEAKKD.

Mg(2+) is bound by residues glutamate 431 and glutamate 438.

The protein belongs to the class-II aminoacyl-tRNA synthetase family. In terms of assembly, homodimer. The cofactor is Mg(2+).

It is found in the cytoplasm. The enzyme catalyses tRNA(Lys) + L-lysine + ATP = L-lysyl-tRNA(Lys) + AMP + diphosphate. This is Lysine--tRNA ligase from Chlamydia trachomatis serovar L2b (strain UCH-1/proctitis).